We begin with the raw amino-acid sequence, 58 residues long: Large ribosomal subunit protein uL30 (58 aa).

It belongs to the universal ribosomal protein uL30 family. As to quaternary structure, part of the 50S ribosomal subunit.

The chain is Large ribosomal subunit protein uL30 from Pseudomonas aeruginosa (strain LESB58).